The primary structure comprises 241 residues: Purine nucleoside phosphorylase DeoD-type (241 aa).

Position 5 (H5) interacts with a purine D-ribonucleoside. Phosphate contacts are provided by residues G21, R25, R44, and 88–91 (RVGS). A purine D-ribonucleoside is bound by residues 180–182 (EME) and 204–205 (SD). D205 acts as the Proton donor in catalysis.

It belongs to the PNP/UDP phosphorylase family. As to quaternary structure, homohexamer; trimer of homodimers.

It carries out the reaction a purine D-ribonucleoside + phosphate = a purine nucleobase + alpha-D-ribose 1-phosphate. It catalyses the reaction a purine 2'-deoxy-D-ribonucleoside + phosphate = a purine nucleobase + 2-deoxy-alpha-D-ribose 1-phosphate. Catalyzes the reversible phosphorolytic breakdown of the N-glycosidic bond in the beta-(deoxy)ribonucleoside molecules, with the formation of the corresponding free purine bases and pentose-1-phosphate. The protein is Purine nucleoside phosphorylase DeoD-type of Yersinia enterocolitica serotype O:8 / biotype 1B (strain NCTC 13174 / 8081).